The primary structure comprises 267 residues: Mediator of RNA polymerase II transcription subunit 8 (267 aa).

Coiled coils occupy residues 2–27 and 118–163; these read QQRE…KGSL and VEEQ…EDRD. Residues 156-165 show a composition bias toward basic and acidic residues; sequence NNPREDRDSE. 2 disordered regions span residues 156 to 180 and 227 to 267; these read NNPR…NPAD and ASGH…PYNR. The segment covering 166-180 has biased composition (polar residues); it reads TSALRQNKPSFNPAD. Residues 236–247 are compositionally biased toward low complexity; the sequence is GPVAPQQPGQPG.

Belongs to the Mediator complex subunit 8 family. As to quaternary structure, component of the Mediator complex. May be part of a multisubunit E3 ubiquitin-protein ligase complex.

It is found in the nucleus. The protein operates within protein modification; protein ubiquitination. In terms of biological role, component of the Mediator complex, a coactivator involved in the regulated transcription of nearly all RNA polymerase II-dependent genes. Mediator functions as a bridge to convey information from gene-specific regulatory proteins to the basal RNA polymerase II transcription machinery. Mediator is recruited to promoters by direct interactions with regulatory proteins and serves as a scaffold for the assembly of a functional preinitiation complex with RNA polymerase II and the general transcription factors. May play a role as a target recruitment subunit in E3 ubiquitin-protein ligase complexes and thus in ubiquitination and subsequent proteasomal degradation of target proteins. The chain is Mediator of RNA polymerase II transcription subunit 8 (med8) from Danio rerio (Zebrafish).